Consider the following 169-residue polypeptide: Small ribosomal subunit protein bS18c (169 aa).

The interval 1–61 is disordered; that stretch reads MYTSKQPFLK…RRPRIGPGDR (61 aa). The span at 27 to 55 shows a compositional bias: basic residues; it reads QTFRKSKQTFRKFKQPFRKSKQPFRRRPR.

The protein belongs to the bacterial ribosomal protein bS18 family. Part of the 30S ribosomal subunit.

It localises to the plastid. The protein localises to the chloroplast. The sequence is that of Small ribosomal subunit protein bS18c from Agrostis stolonifera (Creeping bentgrass).